We begin with the raw amino-acid sequence, 335 residues long: MEKVLSVQNLHVSFTTYGGTVQAVRGVSFDLYKGETFAIVGESGCGKSVTSQSIMGLLPPYSAKVTDGRILFKNKDLCRLSDKEMRGIRGADISMIFQDPMTALNPTLTVGDQLGEALLRHKKMSKKAARKEVLSMLSLVGIPDPGERLKQYPHQFSGGMRQRIVIAMALICEPDILIADEPTTALDVTIQAQILELFKEIQRKTDVSVILITHDLGVVAQVADRVAVMYAGKMAEIGTRKDIFYQPQHPYTKGLLGSVPRLDLNGAELTPIDGTPPDLFSPPPGCPFAARCPNRMVVCDRVYPGQTIRSDSHTVNCWLQDQRAEHAVLSGDAKD.

Residues 7–256 (VQNLHVSFTT…PQHPYTKGLL (250 aa)) enclose the ABC transporter domain. An ATP-binding site is contributed by 41–48 (GESGCGKS).

The protein belongs to the ABC transporter superfamily.

It is found in the cell membrane. The catalysed reaction is a dipeptide(out) + ATP + H2O = a dipeptide(in) + ADP + phosphate + H(+). Functionally, probably part of the ABC transporter DppBCDE involved in dipeptide transport. Responsible for energy coupling to the transport system. This Bacillus subtilis (strain 168) protein is Dipeptide transport ATP-binding protein DppD (dppD).